The following is a 20-amino-acid chain: Disintegrin (20 aa).

The Disintegrin domain maps to glutamate 1–threonine 20. 2 cysteine pairs are disulfide-bonded: cysteine 6-cysteine 15 and cysteine 8-cysteine 16.

Belongs to the venom metalloproteinase (M12B) family. P-II subfamily. P-IIa sub-subfamily. As to quaternary structure, monomer. As to expression, expressed by the venom gland.

Its subcellular location is the secreted. In terms of biological role, inhibits fibrinogen interaction with platelets. Acts by binding to alpha-IIb/beta-3 (ITGA2B/ITGB3) on the platelet surface and inhibits aggregation induced by ADP, thrombin, platelet-activating factor and collagen. This Bothrops fonsecai (Fonseca's lancehead) protein is Disintegrin.